The chain runs to 378 residues: Endopolygalacturonase I (378 aa).

Positions 1 to 20 are cleaved as a signal peptide; sequence MHLNTTLLVSLALGAASVLA. The propeptide occupies 21–39; that stretch reads SPAPPAITAPPTAEEIAKR. C43 and C61 form a disulfide bridge. O-linked (Man...) threonine glycosylation occurs at T44. S46, S48, S52, S53, S55, S57, and S62 each carry an O-linked (Man...) serine glycan. T63 is a glycosylation site (O-linked (Man...) threonine). O-linked (Man...) serine glycosylation is present at S73. PbH1 repeat units lie at residues 174 to 204, 205 to 226, 227 to 247, 256 to 277, and 285 to 307; these read SDYLTLKDITIDNSDGDDNGGHNTDAFDIGT, STYVTISGATVYNQDDCVAVNS, GENIYFSGGYCSGGHGLSIGS, VKNVTFVDSTIINSDNGVRIKT, and VSDVTYKDITLTSIAKYGIVVQQ. D219 acts as the Proton donor in catalysis. An intrachain disulfide couples C221 to C237. H241 is a catalytic residue. N-linked (GlcNAc...) asparagine glycosylation occurs at N258. Intrachain disulfides connect C345-C350 and C369-C378.

Belongs to the glycosyl hydrolase 28 family.

Its subcellular location is the secreted. It carries out the reaction (1,4-alpha-D-galacturonosyl)n+m + H2O = (1,4-alpha-D-galacturonosyl)n + (1,4-alpha-D-galacturonosyl)m.. In terms of biological role, involved in maceration and soft-rotting of plant tissue. Hydrolyzes the 1,4-alpha glycosidic bonds of de-esterified pectate in the smooth region of the plant cell wall. This is Endopolygalacturonase I (pgaI) from Aspergillus aculeatus.